The primary structure comprises 280 residues: Adenosylcobinamide-GDP ribazoletransferase (280 aa).

6 helical membrane-spanning segments follow: residues 44-64, 69-89, 111-131, 135-155, 189-209, and 226-246; these read GVGVLVGALVAAFTALLLFVL, STPLVAAALGTALGVLLTGAF, LVIMKDSRVGAFGAIAVMLAL, VALLALLGAVSATLMVAALFV, ISVAALLTGFIWCFMALALVI, and ALLQALLSAVVASCVAWAVMA.

The protein belongs to the CobS family. Mg(2+) is required as a cofactor.

The protein resides in the cell inner membrane. It catalyses the reaction alpha-ribazole + adenosylcob(III)inamide-GDP = adenosylcob(III)alamin + GMP + H(+). The enzyme catalyses alpha-ribazole 5'-phosphate + adenosylcob(III)inamide-GDP = adenosylcob(III)alamin 5'-phosphate + GMP + H(+). Its pathway is cofactor biosynthesis; adenosylcobalamin biosynthesis; adenosylcobalamin from cob(II)yrinate a,c-diamide: step 7/7. In terms of biological role, joins adenosylcobinamide-GDP and alpha-ribazole to generate adenosylcobalamin (Ado-cobalamin). Also synthesizes adenosylcobalamin 5'-phosphate from adenosylcobinamide-GDP and alpha-ribazole 5'-phosphate. In Albidiferax ferrireducens (strain ATCC BAA-621 / DSM 15236 / T118) (Rhodoferax ferrireducens), this protein is Adenosylcobinamide-GDP ribazoletransferase.